The following is a 317-amino-acid chain: Probable porphobilinogen deaminase (317 aa).

Cys-234 bears the S-(dipyrrolylmethanemethyl)cysteine mark.

This sequence belongs to the HMBS family. Dipyrromethane serves as cofactor.

It catalyses the reaction 4 porphobilinogen + H2O = hydroxymethylbilane + 4 NH4(+). It functions in the pathway porphyrin-containing compound metabolism; protoporphyrin-IX biosynthesis; coproporphyrinogen-III from 5-aminolevulinate: step 2/4. Functionally, tetrapolymerization of the monopyrrole PBG into the hydroxymethylbilane pre-uroporphyrinogen in several discrete steps. The protein is Probable porphobilinogen deaminase of Methanosarcina acetivorans (strain ATCC 35395 / DSM 2834 / JCM 12185 / C2A).